Here is a 309-residue protein sequence, read N- to C-terminus: Taste receptor type 2 member 114 (309 aa).

Over 1-7 (MLSTMEG) the chain is Extracellular. A helical membrane pass occupies residues 8 to 28 (VLLSVSTSEAVLGIVGNTFIA). Residues 29 to 43 (LVNCMDYNRNKKLSN) lie on the Cytoplasmic side of the membrane. The chain crosses the membrane as a helical span at residues 44-64 (IGFILTGLAISRICLVLILIT). Over 65–87 (EAYIKIFYPQLLSPVNIIELISY) the chain is Extracellular. Residues 88–108 (LWIIICQLNVWFATSLSIFYF) traverse the membrane as a helical segment. Residues 109-127 (LKIANFSHYIFVWLKRRID) lie on the Cytoplasmic side of the membrane. The helical transmembrane segment at 128-148 (LVFFFLIGCLLISWLFSFPVV) threads the bilayer. The Extracellular segment spans residues 149-182 (AKMVKDNKMLYINTSWQIHMKKSELIINYVFTNG). Asn161 is a glycosylation site (N-linked (GlcNAc...) asparagine). The chain crosses the membrane as a helical span at residues 183–203 (GVFLFFMIMLIVCFLLIISLW). The Cytoplasmic segment spans residues 204 to 233 (RHRRQMESNKLGFRDLNTEVHVRTIKVLLS). A helical membrane pass occupies residues 234 to 254 (FIILFILHFMGITINVICLLI). Topologically, residues 255 to 259 (PESNL) are extracellular. A helical membrane pass occupies residues 260 to 280 (LFMFGLTTAFIYPGCHSLILI). Residues 281 to 309 (LANSRLKQCSVMILQLLKCCENGKELRDT) lie on the Cytoplasmic side of the membrane.

It belongs to the G-protein coupled receptor T2R family.

It localises to the membrane. Functionally, putative taste receptor which may play a role in the perception of bitterness. This chain is Taste receptor type 2 member 114, found in Mus musculus (Mouse).